We begin with the raw amino-acid sequence, 221 residues long: Casparian strip membrane protein 3 (221 aa).

The segment covering 1-12 (MDIEKAASRREE) has biased composition (basic and acidic residues). Residues 1–28 (MDIEKAASRREEEEPIVQRPKLDKGKGK) are disordered. Over 1–58 (MDIEKAASRREEEEPIVQRPKLDKGKGKAHVFAPPMNYNRIMDKHKQEKVSAAGWKRG) the chain is Cytoplasmic. A helical membrane pass occupies residues 59–79 (VAIFDFVLRLIAAITAMAAAA). Over 80–109 (KMATTEETLPFFTQFLQFQAEYTDLPTMSS) the chain is Extracellular. Residues 110–130 (FVIVNSIVGGYLTLSLPFSIV) form a helical membrane-spanning segment. At 131-148 (CILRPLAVPPRLFLIICD) the chain is on the cytoplasmic side. Residues 149-169 (TAMMGLTMMAASASAAIVYLA) traverse the membrane as a helical segment. At 170–194 (HNGNSSSNWLPVCQQFGDFCQGTSG) the chain is on the extracellular side. N-linked (GlcNAc...) asparagine glycosylation is present at Asn-173. A helical transmembrane segment spans residues 195–215 (AVVASFIAATLLMFLVILSAF). The Cytoplasmic portion of the chain corresponds to 216–221 (ALKRST).

This sequence belongs to the Casparian strip membrane proteins (CASP) family. In terms of assembly, homodimer and heterodimers.

The protein localises to the cell membrane. Regulates membrane-cell wall junctions and localized cell wall deposition. Required for establishment of the Casparian strip membrane domain (CSD) and the subsequent formation of Casparian strips, a cell wall modification of the root endodermis that determines an apoplastic barrier between the intraorganismal apoplasm and the extraorganismal apoplasm and prevents lateral diffusion. The polypeptide is Casparian strip membrane protein 3 (Arabidopsis lyrata subsp. lyrata (Lyre-leaved rock-cress)).